The following is a 240-amino-acid chain: Uridylate kinase (240 aa).

13 to 16 is a binding site for ATP; it reads KASG. The involved in allosteric activation by GTP stretch occupies residues 21-26; the sequence is GSQGFG. Glycine 55 contacts UMP. Positions 56 and 60 each coordinate ATP. UMP is bound by residues aspartate 75 and 136–143; that span reads TGNPFFTT. Threonine 163, glutamine 164, tyrosine 169, and aspartate 172 together coordinate ATP.

Belongs to the UMP kinase family. In terms of assembly, homohexamer.

The protein resides in the cytoplasm. The catalysed reaction is UMP + ATP = UDP + ADP. The protein operates within pyrimidine metabolism; CTP biosynthesis via de novo pathway; UDP from UMP (UMPK route): step 1/1. Its activity is regulated as follows. Allosterically activated by GTP. Inhibited by UTP. Catalyzes the reversible phosphorylation of UMP to UDP. This chain is Uridylate kinase, found in Brucella melitensis biotype 1 (strain ATCC 23456 / CCUG 17765 / NCTC 10094 / 16M).